The primary structure comprises 435 residues: Adenylosuccinate synthetase (435 aa).

Residues 11–17 and 39–41 contribute to the GTP site; these read GDEGKGK and GHT. The Proton acceptor role is filled by Asp-12. Mg(2+) is bound by residues Asp-12 and Gly-39. Residues 12 to 15, 37 to 40, Thr-128, Arg-142, Gln-223, Thr-238, and Arg-302 each bind IMP; these read DEGK and NAGH. The Proton donor role is filled by His-40. 298–304 is a binding site for substrate; that stretch reads SVTGRPR. GTP-binding positions include Arg-304, 330 to 332, and 412 to 414; these read KLD and STG.

This sequence belongs to the adenylosuccinate synthetase family. As to quaternary structure, homodimer. The cofactor is Mg(2+).

Its subcellular location is the cytoplasm. The enzyme catalyses IMP + L-aspartate + GTP = N(6)-(1,2-dicarboxyethyl)-AMP + GDP + phosphate + 2 H(+). It functions in the pathway purine metabolism; AMP biosynthesis via de novo pathway; AMP from IMP: step 1/2. Functionally, plays an important role in the de novo pathway of purine nucleotide biosynthesis. Catalyzes the first committed step in the biosynthesis of AMP from IMP. This is Adenylosuccinate synthetase from Coxiella burnetii (strain RSA 493 / Nine Mile phase I).